The primary structure comprises 588 residues: CD166 antigen (588 aa).

The N-terminal stretch at 1-33 (MMEPPAAAARASCRRRPLLCLLLAALCMPPALG) is a signal peptide. Ig-like V-type domains are found at residues 34 to 126 (LYTV…TEDD) and 131 to 240 (PTVV…KTIQ). The Extracellular portion of the chain corresponds to 34–532 (LYTVNAVYGD…NSEKVNDQAK (499 aa)). Cystine bridges form between Cys49–Cys119 and Cys163–Cys226. Asn101, Asn173, Asn199, Asn271, Asn312, Asn366, Asn462, Asn485, and Asn504 each carry an N-linked (GlcNAc...) asparagine glycan. Ig-like C2-type domains lie at 251–333 (PTEK…TTIT), 338–414 (DLQL…KTLK), and 421–501 (PQIK…RTVT). Cystine bridges form between Cys276-Cys319, Cys359-Cys397, and Cys440-Cys490. Residues 533-553 (LIVGIVVGLLLVALVAGVVYW) form a helical membrane-spanning segment. Over 554-588 (LYVKKSKTASKHVDKDLGNIEENKKLEENNHKSET) the chain is Cytoplasmic.

As to quaternary structure, homodimer. Interacts (via extracellular domain) with CD6 (via extracellular domain). Homodimerization and interaction with CD6 involve the same region and cannot occur simultaneously. The affinity for CD6 is much higher than the affinity for self-association. Post-translationally, glycosylated. In terms of tissue distribution, detected in embryo. Detected in embryonic spinal cord and embryonic brain. Within the spinal cord it is localized to axons in the dorsal funiculus, midline floor plate cells, and motoneurons. Detected in embryonic epithelia and brain. After hatching, detected in bursa of Fabricius and thymus. Detected on embryonic retinal ganglion cell axon growth cones (at protein level). Detected in embryonic retina and in the optic fiber layer, which is composed of retinal ganglion cell axons and their growth cones.

The protein resides in the cell membrane. Its subcellular location is the cell projection. It is found in the axon. The protein localises to the dendrite. In terms of biological role, cell adhesion molecule that mediates both heterotypic cell-cell contacts via its interaction with CD6, as well as homotypic cell-cell contacts. Promotes T-cell activation and proliferation via its interactions with CD6. Contributes to the formation and maturation of the immunological synapse via its interactions with CD6. Mediates homotypic interactions with cells that express ALCAM. Mediates attachment of dendritic cells onto endothelial cells via homotypic interaction. Inhibits endothelial cell migration and promotes endothelial tube formation via homotypic interactions. Required for normal organization of the lymph vessel network. Required for normal hematopoietic stem cell engraftment in the bone marrow. Plays a role in hematopoiesis; required for normal numbers of hematopoietic stem cells in bone marrow. Promotes in vitro osteoblast proliferation and differentiation. Promotes neurite extension, axon growth and axon guidance; axons grow preferentially on surfaces that contain ALCAM. Mediates outgrowth and pathfinding for retinal ganglion cell axons. This Gallus gallus (Chicken) protein is CD166 antigen (ALCAM).